The following is a 389-amino-acid chain: S-adenosylmethionine synthase (389 aa).

His19 lines the ATP pocket. Residue Asp21 coordinates Mg(2+). Glu47 is a K(+) binding site. 2 residues coordinate L-methionine: Glu60 and Gln103. Residues 103-113 (QSGDIAQGVDR) are flexible loop. ATP is bound by residues 168–170 (DGK), 234–235 (RF), Asp243, 249–250 (RK), Ala266, and Lys270. Asp243 is a binding site for L-methionine. Lys274 is an L-methionine binding site.

This sequence belongs to the AdoMet synthase family. Homotetramer; dimer of dimers. It depends on Mg(2+) as a cofactor. K(+) serves as cofactor.

The protein localises to the cytoplasm. The enzyme catalyses L-methionine + ATP + H2O = S-adenosyl-L-methionine + phosphate + diphosphate. The protein operates within amino-acid biosynthesis; S-adenosyl-L-methionine biosynthesis; S-adenosyl-L-methionine from L-methionine: step 1/1. Its function is as follows. Catalyzes the formation of S-adenosylmethionine (AdoMet) from methionine and ATP. The overall synthetic reaction is composed of two sequential steps, AdoMet formation and the subsequent tripolyphosphate hydrolysis which occurs prior to release of AdoMet from the enzyme. The protein is S-adenosylmethionine synthase of Nitratidesulfovibrio vulgaris (strain DSM 19637 / Miyazaki F) (Desulfovibrio vulgaris).